The primary structure comprises 181 residues: Adenine phosphoribosyltransferase (181 aa).

Belongs to the purine/pyrimidine phosphoribosyltransferase family. In terms of assembly, homodimer.

It localises to the cytoplasm. It catalyses the reaction AMP + diphosphate = 5-phospho-alpha-D-ribose 1-diphosphate + adenine. It participates in purine metabolism; AMP biosynthesis via salvage pathway; AMP from adenine: step 1/1. Catalyzes a salvage reaction resulting in the formation of AMP, that is energically less costly than de novo synthesis. The sequence is that of Adenine phosphoribosyltransferase from Methylorubrum extorquens (strain CM4 / NCIMB 13688) (Methylobacterium extorquens).